The following is a 240-amino-acid chain: Superoxide dismutase [Cu-Zn] (240 aa).

The first 32 residues, 1 to 32 (MPKPADHRNHAAVSTSVLSALFLGAGAALLSA), serve as a signal peptide directing secretion. The N-palmitoyl cysteine moiety is linked to residue Cys-33. Cys-33 is lipidated: S-diacylglycerol cysteine. Polar residues-rich tracts occupy residues 36–51 (PQHA…SIWT) and 68–77 (GAQSLTSTLT). The tract at residues 36–77 (PQHASTVPGTTPSIWTGSPAPSGLSGHDEESPGAQSLTSTLT) is disordered. Residues His-116 and His-118 each coordinate Cu cation. Cys-123 and Cys-234 are joined by a disulfide. Positions 146 and 158 each coordinate Zn(2+). His-195 is a Cu cation binding site.

Belongs to the Cu-Zn superoxide dismutase family. Cu cation serves as cofactor. It depends on Zn(2+) as a cofactor.

The protein resides in the cell membrane. The enzyme catalyses 2 superoxide + 2 H(+) = H2O2 + O2. Inhibited by the copper chelator diethyl dithiocarbamate. Destroys radicals which are normally produced within the cells and which are toxic to biological systems. May play a role in favoring mycobacterial survival in phagocytes. The protein is Superoxide dismutase [Cu-Zn] (sodC) of Mycobacterium bovis (strain ATCC BAA-935 / AF2122/97).